The following is a 418-amino-acid chain: Transmembrane protease serine 11D (418 aa).

The Cytoplasmic portion of the chain corresponds to 1-20 (MYRPARVTSTSRFLNPYVVC). Residues 21–41 (FIVVAGVVILAVTIALLVYFL) form a helical; Signal-anchor for type II membrane protein membrane-spanning segment. At 42 to 418 (AFDQKSYFYR…LDWIRQQTGI (377 aa)) the chain is on the extracellular side. The SEA domain maps to 46–163 (KSYFYRSSFQ…STEITSLTDQ (118 aa)). N144 carries an N-linked (GlcNAc...) asparagine glycan. Intrachain disulfides connect C173–C292, C212–C228, C337–C353, and C364–C393. The Peptidase S1 domain maps to 187–417 (ILGGTEAEEG…YLDWIRQQTG (231 aa)). Catalysis depends on charge relay system residues H227 and D272. The active-site Charge relay system is S368.

It belongs to the peptidase S1 family. As to quaternary structure, monomer. As to expression, located in the cells of the submucosal serous glands of the bronchi and trachea.

It localises to the cell membrane. The protein localises to the secreted. Strongly inhibited by diisopropyl fluorophosphate, leupeptin, antipain, aprotinin, and soybean trypsin inhibitor, but hardly inhibited by secretory leukocyte protease inhibitor at 10 microM. In terms of biological role, may play some biological role in the host defense system on the mucous membrane independently of or in cooperation with other substances in airway mucous or bronchial secretions. Plays a role in the proteolytic processing of ACE2. Proteolytically cleaves and activates the human coronavirus 229E (HCoV-229E) spike glycoprotein which facilitate virus-cell membrane fusions; spike proteins are synthesized and maintained in precursor intermediate folding states and proteolysis permits the refolding and energy release required to create stable virus-cell linkages and membrane coalescence. Preferentially cleaves the C-terminal side of arginine residues at the P1 position of certain peptides, cleaving Boc-Phe-Ser-Arg-4-methylcoumaryl-7-amide most efficiently and having an optimum pH of 8.6 with this substrate. This is Transmembrane protease serine 11D (TMPRSS11D) from Homo sapiens (Human).